Consider the following 57-residue polypeptide: MAVPKKKTSKAKRDQRRATWRRQAALQAQRALSLGKSVLTGRSNSFVYPEDEDEDED.

Positions 1-20 (MAVPKKKTSKAKRDQRRATW) are enriched in basic residues. Positions 1–24 (MAVPKKKTSKAKRDQRRATWRRQA) are disordered.

Belongs to the bacterial ribosomal protein bL32 family.

The chain is Large ribosomal subunit protein bL32 from Gloeothece citriformis (strain PCC 7424) (Cyanothece sp. (strain PCC 7424)).